A 364-amino-acid polypeptide reads, in one-letter code: Aminomethyltransferase (364 aa).

It belongs to the GcvT family. In terms of assembly, the glycine cleavage system is composed of four proteins: P, T, L and H.

It carries out the reaction N(6)-[(R)-S(8)-aminomethyldihydrolipoyl]-L-lysyl-[protein] + (6S)-5,6,7,8-tetrahydrofolate = N(6)-[(R)-dihydrolipoyl]-L-lysyl-[protein] + (6R)-5,10-methylene-5,6,7,8-tetrahydrofolate + NH4(+). Functionally, the glycine cleavage system catalyzes the degradation of glycine. The protein is Aminomethyltransferase of Salmonella paratyphi C (strain RKS4594).